A 121-amino-acid chain; its full sequence is uncharacterized protein (121 aa).

The interval 101–121 (TVVKKEDVRESPVDTFMENAT) is disordered. Residues 102 to 112 (VVKKEDVRESP) show a composition bias toward basic and acidic residues.

This is an uncharacterized protein from Schizosaccharomyces pombe (strain 972 / ATCC 24843) (Fission yeast).